A 1463-amino-acid polypeptide reads, in one-letter code: Nucleoporin NUP152 (1463 aa).

Disordered regions lie at residues 1–199 (MDPP…GRPG), 339–568 (GIPD…ELPA), and 609–1064 (TTKK…FGNT). Polar residues-rich tracts occupy residues 32-42 (STNSNSVTANA), 81-92 (GPSSKLSQSVSA), 144-155 (TSSKATSFSGAP), 175-191 (TTYTQRVSSHPLTQSFP), 367-378 (PSSSTFTHTASP), and 416-472 (PAKT…SSNI). Over residues 481 to 498 (KDEDNESDTGSEAEAEDE) the composition is skewed to acidic residues. 2 stretches are compositionally biased toward low complexity: residues 511 to 523 (GASSSAPSEGGES) and 616 to 630 (AAAPAEAPKEATPTT). 3 stretches are compositionally biased toward polar residues: residues 651–664 (IFGSTTNPTETSIP), 673–689 (PATSTTNSLFGATTSAA), and 720–746 (TTESPKTNLFQFGTPNKTETAPATQPQ). The FXFG 1 repeat unit spans residues 729–732 (FQFG). Low complexity predominate over residues 753 to 768 (KPPSTETPTEKPATTS). A compositionally biased stretch (polar residues) spans 777–789 (PATTSSLFGSATT). A compositionally biased stretch (low complexity) spans 803–813 (TTTPADKPTTT). Polar residues predominate over residues 814–828 (NLFGSTSTQATSGSD). The FXFG 2 repeat unit spans residues 835–838 (FAFG). Positions 840-863 (TTESKPTTSLFGSTTPAPATSTEN) are enriched in polar residues. Residues 870–881 (ATTTSATPATNT) are compositionally biased toward low complexity. Composition is skewed to polar residues over residues 900–923 (GSSTTTAAPVFQFGSTPASTSTEQ), 940–961 (GSTSATSTEQKPLFGSSTTMTE), 968–987 (SISTTATEQKPLFGSTSTTE), 998–1029 (STEQKSLFGITPSTTENNPASIFGNSSTSTEQ), and 1037–1055 (PASTEQKPLFGSTPSTTEN). An FXFG 3 repeat occupies 910–913 (FQFG). 4 FXFG repeats span residues 1074 to 1077 (FNFG), 1127 to 1130 (FNFG), 1141 to 1144 (FTFG), and 1152 to 1155 (FTFG). Disordered stretches follow at residues 1155–1174 (GASSDSSNASNNASSAPIFS) and 1179–1217 (QPSSTPLFGQNNPPAASNIFASSLAPVGGTSTGTSKHVP). Positions 1156-1170 (ASSDSSNASNNASSA) are enriched in low complexity. Residues 1173-1176 (FSFG) form an FXFG 8 repeat. The span at 1179 to 1199 (QPSSTPLFGQNNPPAASNIFA) shows a compositional bias: polar residues. One copy of the FXFG 9 repeat lies at 1236–1239 (FTFG). Residues 1240 to 1271 (GASSLATTPAASTPEPSAANAAAAGEDQGASA) show a composition bias toward low complexity. Disordered regions lie at residues 1240–1335 (GASS…PWKV) and 1416–1463 (AALE…DEKK). The region spanning 1289–1427 (GEEDESVVHE…LEEHKKANEK (139 aa)) is the RanBD1 domain. Basic and acidic residues predominate over residues 1418–1463 (LEEHKKANEKKDGEKNEESEKKDEKQEEKKNEEKKDEKEEKKDEKK).

The nuclear pore complex (NPC) constitutes the exclusive means of nucleocytoplasmic transport. NPCs allow the passive diffusion of ions and small molecules and the active, nuclear transport receptor-mediated bidirectional transport of macromolecules such as proteins, RNAs, ribonucleoparticles (RNPs), and ribosomal subunits across the nuclear envelope. The 55-60 MDa NPC is composed of at least 28 different subunits: AMO1, ELYS, GLE1, GLE2, MLP1, NDC1, NIC96, NSP1, NUP133, NUP145, NUP152, NUP159, NUP170, NUP188, NUP192, NUP37, NUP49, NUP53, NUP56, NUP57, NUP82, NUP84, NUP85, POM152, POM33, POM34, SEC13 and SEH1. Due to its 8-fold rotational symmetry, all subunits are present with 8 copies or multiples thereof.

It localises to the nucleus. The protein localises to the nuclear pore complex. Its subcellular location is the nucleus membrane. Functions as a component of the nuclear pore complex (NPC). NPC components, collectively referred to as nucleoporins (NUPs), can play the role of both NPC structural components and of docking or interaction partners for transiently associated nuclear transport factors. Active directional transport is assured by both, a Phe-Gly (FG) repeat affinity gradient for these transport factors across the NPC and a transport cofactor concentration gradient across the nuclear envelope (GSP1 and GSP2 GTPases associated predominantly with GTP in the nucleus, with GDP in the cytoplasm). In Chaetomium thermophilum (strain DSM 1495 / CBS 144.50 / IMI 039719) (Thermochaetoides thermophila), this protein is Nucleoporin NUP152 (NUP152).